Reading from the N-terminus, the 357-residue chain is Protein-glutamate methylesterase/protein-glutamine glutaminase 1 (357 aa).

Positions 7–125 constitute a Response regulatory domain; sequence RAVIIDDSLL…QFDPEEIGNI (119 aa). A 4-aspartylphosphate modification is found at D58. The region spanning 162-344 is the CheB-type methylesterase domain; the sequence is KKSPIQAICI…VEYIEPVTEI (183 aa). Active-site residues include S174, H201, and D297.

The protein belongs to the CheB family. Post-translationally, phosphorylated by CheA. Phosphorylation of the N-terminal regulatory domain activates the methylesterase activity.

Its subcellular location is the cytoplasm. It catalyses the reaction [protein]-L-glutamate 5-O-methyl ester + H2O = L-glutamyl-[protein] + methanol + H(+). It carries out the reaction L-glutaminyl-[protein] + H2O = L-glutamyl-[protein] + NH4(+). Its function is as follows. Involved in chemotaxis. Part of a chemotaxis signal transduction system that modulates chemotaxis in response to various stimuli. Catalyzes the demethylation of specific methylglutamate residues introduced into the chemoreceptors (methyl-accepting chemotaxis proteins or MCP) by CheR. Also mediates the irreversible deamidation of specific glutamine residues to glutamic acid. This Leptospira interrogans serogroup Icterohaemorrhagiae serovar Lai (strain 56601) protein is Protein-glutamate methylesterase/protein-glutamine glutaminase 1.